Reading from the N-terminus, the 172-residue chain is Crossover junction endodeoxyribonuclease RuvC (172 aa).

Catalysis depends on residues Asp-7, Glu-68, and Asp-140. Residues Asp-7, Glu-68, and Asp-140 each contribute to the Mg(2+) site.

The protein belongs to the RuvC family. As to quaternary structure, homodimer which binds Holliday junction (HJ) DNA. The HJ becomes 2-fold symmetrical on binding to RuvC with unstacked arms; it has a different conformation from HJ DNA in complex with RuvA. In the full resolvosome a probable DNA-RuvA(4)-RuvB(12)-RuvC(2) complex forms which resolves the HJ. It depends on Mg(2+) as a cofactor.

Its subcellular location is the cytoplasm. It catalyses the reaction Endonucleolytic cleavage at a junction such as a reciprocal single-stranded crossover between two homologous DNA duplexes (Holliday junction).. Its function is as follows. The RuvA-RuvB-RuvC complex processes Holliday junction (HJ) DNA during genetic recombination and DNA repair. Endonuclease that resolves HJ intermediates. Cleaves cruciform DNA by making single-stranded nicks across the HJ at symmetrical positions within the homologous arms, yielding a 5'-phosphate and a 3'-hydroxyl group; requires a central core of homology in the junction. The consensus cleavage sequence is 5'-(A/T)TT(C/G)-3'. Cleavage occurs on the 3'-side of the TT dinucleotide at the point of strand exchange. HJ branch migration catalyzed by RuvA-RuvB allows RuvC to scan DNA until it finds its consensus sequence, where it cleaves and resolves the cruciform DNA. The polypeptide is Crossover junction endodeoxyribonuclease RuvC (Polynucleobacter asymbioticus (strain DSM 18221 / CIP 109841 / QLW-P1DMWA-1) (Polynucleobacter necessarius subsp. asymbioticus)).